Consider the following 369-residue polypeptide: uncharacterized protein (369 aa).

Position 184 is an N6-(pyridoxal phosphate)lysine (Lys184).

Belongs to the class-V pyridoxal-phosphate-dependent aminotransferase family. Requires pyridoxal 5'-phosphate as cofactor.

This is an uncharacterized protein from Helicobacter pylori (strain ATCC 700392 / 26695) (Campylobacter pylori).